The following is a 590-amino-acid chain: MIVFDNGTRVFINSSTNKDIYVGFSGFGFEKDIGGILGIAHLLEHILISFDASRFVANASTARSYMSFWCTPIRGRATSVDAVRTLISWFFDKDGLKDDFPVSKIKYHIKELENEYYFRNEVFHCMDALTFLANGDLYNGGRLSMLDRLEDIPLILRDRMRTIIGPNVVIFVRELNDVVLSLLANTFGRLPACPLTIPCTVRTIIGGKTIMMPSPFYTVMVRVEPSLHNILSILCLYEIYHLVDYETVDNKLYVTFSFIHEHDYERFLQGSGRLNLTIYKKIRLCYGDDFLMNVYLSFPCIRHDIFDYLTIVNTDTSSMISSLERDIYQSVRTGDYIVVYPNFSNTMSNTADRQLHKTVVINPNIVYASQPTTSIDLMKKQTHNEMYIKYSDAGFIDYVQLALGLRRKIHKHVHGIHIRHQFSADDIKTILESDTFMKYSKSKPAAMYQYLILSFFVSGNTIEDILQHRESVVKLCRTYKNKIVLGKQTRYDIQTLSSFVCGIFKGPSVTSEYLTDIMWKLKRKGLIYSLEFVELQKNMFYLFMFTIYPEDVTTYLSSRKLFTSRCVVVSKKGNTEDFSSMKKDIIIKLR.

Zn(2+) is bound at residue H41. Residue E44 is part of the active site. H45 serves as a coordination point for Zn(2+).

The protein belongs to the peptidase M44 family. It depends on Zn(2+) as a cofactor.

Its function is as follows. Seems to be involved in viral proteins maturation by cleavage at Ala-Gly-|-Xaa motifs. This is Probable metalloendopeptidase G1-type from Oryctolagus cuniculus (Rabbit).